The following is an 881-amino-acid chain: Heat shock protein 70 homolog LHS1 (881 aa).

An N-terminal signal peptide occupies residues 1–20; it reads MRNVLRLLFLTAFVAIGSLA. Asn-128, Asn-458, Asn-474, Asn-481, Asn-489, Asn-527, and Asn-844 each carry an N-linked (GlcNAc...) asparagine glycan. Basic and acidic residues predominate over residues 833–844; that stretch reads RKLEQEKSRNNN. The tract at residues 833–881 is disordered; that stretch reads RKLEQEKSRNNNETESTVINSADDKTTIVNDKTTESNPSSEEDILHDEL. A compositionally biased stretch (polar residues) spans 859 to 871; the sequence is TIVNDKTTESNPS. Positions 872 to 881 are enriched in acidic residues; the sequence is SEEDILHDEL. The Prevents secretion from ER motif lies at 878–881; sequence HDEL.

The protein belongs to the heat shock protein 70 family. In terms of assembly, interacts with the heat shock protein 70 (HSP70) KAR2, and this stimulates nucleotide exchange on KAR2. KAR2 in turn acts to stimulate the ATPase activity of LHS1. In terms of processing, N-glycosylated.

The protein localises to the endoplasmic reticulum lumen. It catalyses the reaction ATP + H2O = ADP + phosphate + H(+). Its function is as follows. Chaperone required for protein translocation and folding in the endoplasmic reticulum. The chain is Heat shock protein 70 homolog LHS1 (LHS1) from Saccharomyces cerevisiae (strain ATCC 204508 / S288c) (Baker's yeast).